The following is a 569-amino-acid chain: Arginine--tRNA ligase (569 aa).

The short motif at 128–138 (ANPTGPLHVGH) is the 'HIGH' region element.

Belongs to the class-I aminoacyl-tRNA synthetase family. In terms of assembly, monomer.

It localises to the cytoplasm. The catalysed reaction is tRNA(Arg) + L-arginine + ATP = L-arginyl-tRNA(Arg) + AMP + diphosphate. This chain is Arginine--tRNA ligase, found in Paracidovorax citrulli (strain AAC00-1) (Acidovorax citrulli).